Reading from the N-terminus, the 701-residue chain is MSRKTPIERYRNIGISAHIDAGKTTTTERILFYTGVNHKLGEVHDGAATMDWMEQEQERGITITSAATTAFWKGMAGNYPEHRINIIDTPGHVDFTIEVERSMRVLDGACMVYDAVGGVQPQSETVWRQANKYNVPRIAFVNKMDRVGADFFRVQTQIADRLKGRAVPIQIPVGAEDHFQGVVDLVKMKAVVWDDASQGVRFEYVDIPAELLPVAQEWRDKMIEAAAEADEALLEQYLAGEPLTETQIKQGLRKRTIANEIVPMLCGSAFKNKGVQSMLDAVIDYLPSPADVPAILGHTEDDREAERHPSDDEPFSALAFKIMTDPFVGQLIFFRVYSGVVNSGDTVYNPVKGKRERLGRILQMHANVRQEIKEVRAGDIAAAVGLKEATTGDTLCDPGKVIILERMSFPEPVISQAVEPKTKADQEKMGIALNRLAQEDPSFRVTTDEESGQTIISGMGELHLEILVDRMRREFGVEASVGKPQVAYRETIRQGVKDVEGKFIKQSGGRGQYGHVVLNLEPMPHGGGYEFVDAIKGGVVPREFIPAVDKGIRETLTAGVLAGYPVVDVKATLVFGSYHDVDSNENAFRMAGSMAFKEGMKRARPILLEPMMSVEVETPEEFTGNVMGDLSSRRGMVHGMEEIAGGGGKVVRAEVPLATMFGYSTSLRSLTQGRATFTMEFKHYAEAPANVAEAVINAKKA.

A tr-type G domain is found at 8–290 (ERYRNIGISA…AVIDYLPSPA (283 aa)). GTP-binding positions include 17–24 (AHIDAGKT), 88–92 (DTPGH), and 142–145 (NKMD).

The protein belongs to the TRAFAC class translation factor GTPase superfamily. Classic translation factor GTPase family. EF-G/EF-2 subfamily.

Its subcellular location is the cytoplasm. Catalyzes the GTP-dependent ribosomal translocation step during translation elongation. During this step, the ribosome changes from the pre-translocational (PRE) to the post-translocational (POST) state as the newly formed A-site-bound peptidyl-tRNA and P-site-bound deacylated tRNA move to the P and E sites, respectively. Catalyzes the coordinated movement of the two tRNA molecules, the mRNA and conformational changes in the ribosome. This chain is Elongation factor G 2, found in Cupriavidus pinatubonensis (strain JMP 134 / LMG 1197) (Cupriavidus necator (strain JMP 134)).